The following is a 198-amino-acid chain: V-type proton ATPase subunit E (198 aa).

Belongs to the V-ATPase E subunit family.

Produces ATP from ADP in the presence of a proton gradient across the membrane. This is V-type proton ATPase subunit E from Borrelia duttonii (strain Ly).